Reading from the N-terminus, the 314-residue chain is Transmembrane protein 178B (314 aa).

Residues 1 to 24 (MRLLAGAGLCLALAALALLAVALS) form the signal peptide. A disordered region spans residues 32-83 (DARRHRDRCRKPGGKRNDPGYMYTPGQHLPLRGEPPSSRIRSPRGGEPGGVR). The segment covering 36–45 (HRDRCRKPGG) has biased composition (basic residues). Transmembrane regions (helical) follow at residues 194–214 (AGFI…GVLG), 228–248 (LLFL…VAGI), and 274–294 (MFCA…CTLA).

Belongs to the TMEM178 family.

The protein resides in the membrane. The polypeptide is Transmembrane protein 178B (tmem178b) (Xenopus tropicalis (Western clawed frog)).